The chain runs to 435 residues: Succinate--CoA ligase [ADP-forming] subunit beta, mitochondrial (435 aa).

The N-terminal 20 residues, 1–20 (MIGRISQPLLNTSQKFMAPA), are a transit peptide targeting the mitochondrion. Positions 32-259 (MKILQNYEIK…SNAEFRQAKL (228 aa)) constitute an ATP-grasp domain. Residues K69 and 76-78 (GRG) contribute to the ATP site. The Mg(2+) site is built by N229 and D243. Residues N294 and 352 to 354 (GIM) contribute to the substrate site.

It belongs to the succinate/malate CoA ligase beta subunit family. ATP-specific subunit beta subfamily. As to quaternary structure, heterodimer of an alpha and a beta subunit. The beta subunit determines specificity for ATP. The cofactor is Mg(2+).

Its subcellular location is the mitochondrion. The catalysed reaction is succinate + ATP + CoA = succinyl-CoA + ADP + phosphate. Its pathway is carbohydrate metabolism; tricarboxylic acid cycle; succinate from succinyl-CoA (ligase route): step 1/1. ATP-specific succinyl-CoA synthetase functions in the citric acid cycle (TCA), coupling the hydrolysis of succinyl-CoA to the synthesis of ATP and thus represents the only step of substrate-level phosphorylation in the TCA. The beta subunit provides nucleotide specificity of the enzyme and binds the substrate succinate, while the binding sites for coenzyme A and phosphate are found in the alpha subunit. The polypeptide is Succinate--CoA ligase [ADP-forming] subunit beta, mitochondrial (Caenorhabditis elegans).